Here is a 407-residue protein sequence, read N- to C-terminus: Phosphopentomutase (407 aa).

Mn(2+)-binding residues include D10, D306, H311, D347, H348, and H359.

This sequence belongs to the phosphopentomutase family. It depends on Mn(2+) as a cofactor.

The protein localises to the cytoplasm. The enzyme catalyses 2-deoxy-alpha-D-ribose 1-phosphate = 2-deoxy-D-ribose 5-phosphate. It carries out the reaction alpha-D-ribose 1-phosphate = D-ribose 5-phosphate. Its pathway is carbohydrate degradation; 2-deoxy-D-ribose 1-phosphate degradation; D-glyceraldehyde 3-phosphate and acetaldehyde from 2-deoxy-alpha-D-ribose 1-phosphate: step 1/2. Its function is as follows. Isomerase that catalyzes the conversion of deoxy-ribose 1-phosphate (dRib-1-P) and ribose 1-phosphate (Rib-1-P) to deoxy-ribose 5-phosphate (dRib-5-P) and ribose 5-phosphate (Rib-5-P), respectively. The chain is Phosphopentomutase from Pectobacterium atrosepticum (strain SCRI 1043 / ATCC BAA-672) (Erwinia carotovora subsp. atroseptica).